The following is a 703-amino-acid chain: Peptide transporter CstA (703 aa).

A run of 16 helical transmembrane segments spans residues 6 to 26 (TKIL…YLAL), 29 to 49 (GESV…MIGY), 87 to 107 (VLFG…GPIL), 118 to 138 (LWIL…VLFI), 162 to 182 (VAMV…AMVV), 190 to 210 (PWGL…GIYM), 221 to 241 (ASII…VIAA), 256 to 276 (LAIV…WFLL), 282 to 302 (LSTF…VLVA), 319 to 339 (GPVF…CGAI), 374 to 394 (AVAI…YFAI), 463 to 483 (LMAF…LTAV), 514 to 534 (GLLA…QGAI), 547 to 567 (FGVS…TILV), 574 to 594 (YTWV…YGGI), and 660 to 680 (AILC…CIGI).

This sequence belongs to the peptide transporter carbon starvation (CstA) (TC 2.A.114) family.

It localises to the cell inner membrane. Involved in the uptake of dipeptides and tripeptides. May influence host-pathogen interactions. Involved in motility and agglutination, and has a role in stimulation of dendritic cells. This Campylobacter jejuni subsp. jejuni serotype O:2 (strain ATCC 700819 / NCTC 11168) protein is Peptide transporter CstA.